The sequence spans 569 residues: Probable pyruvate decarboxylase Pdc101 (569 aa).

Positions 33 and 120 each coordinate substrate. A Phosphoserine modification is found at S233. Residues 396-478 (DSWFNGLQMK…FLLNNRGYTI (83 aa)) form a thiamine pyrophosphate binding region. Residues D446, N473, and G475 each coordinate Mg(2+). E479 lines the substrate pocket. T521 is modified (phosphothreonine). S522 carries the post-translational modification Phosphoserine.

The protein belongs to the TPP enzyme family. In terms of assembly, homotetramer. Requires a metal cation as cofactor. It depends on thiamine diphosphate as a cofactor.

It catalyses the reaction a 2-oxocarboxylate + H(+) = an aldehyde + CO2. In Schizosaccharomyces pombe (strain 972 / ATCC 24843) (Fission yeast), this protein is Probable pyruvate decarboxylase Pdc101 (pdc101).